Here is a 287-residue protein sequence, read N- to C-terminus: Pyridoxal 5'-phosphate synthase subunit PdxS (287 aa).

Aspartate 21 provides a ligand contact to D-ribose 5-phosphate. Residue lysine 78 is the Schiff-base intermediate with D-ribose 5-phosphate of the active site. Glycine 150 is a binding site for D-ribose 5-phosphate. Arginine 162 lines the D-glyceraldehyde 3-phosphate pocket. D-ribose 5-phosphate contacts are provided by residues glycine 211 and 232 to 233 (GS).

Belongs to the PdxS/SNZ family. As to quaternary structure, in the presence of PdxT, forms a dodecamer of heterodimers.

The catalysed reaction is aldehydo-D-ribose 5-phosphate + D-glyceraldehyde 3-phosphate + L-glutamine = pyridoxal 5'-phosphate + L-glutamate + phosphate + 3 H2O + H(+). It participates in cofactor biosynthesis; pyridoxal 5'-phosphate biosynthesis. In terms of biological role, catalyzes the formation of pyridoxal 5'-phosphate from ribose 5-phosphate (RBP), glyceraldehyde 3-phosphate (G3P) and ammonia. The ammonia is provided by the PdxT subunit. Can also use ribulose 5-phosphate and dihydroxyacetone phosphate as substrates, resulting from enzyme-catalyzed isomerization of RBP and G3P, respectively. The sequence is that of Pyridoxal 5'-phosphate synthase subunit PdxS from Francisella tularensis subsp. tularensis (strain FSC 198).